The primary structure comprises 129 residues: RutC family protein PM1466 (129 aa).

Belongs to the RutC family.

The chain is RutC family protein PM1466 from Pasteurella multocida (strain Pm70).